We begin with the raw amino-acid sequence, 27 residues long: Pregnancy-associated glycoprotein 59 (27 aa).

The protein belongs to the peptidase A1 family. In terms of processing, glycosylated. As to expression, placenta.

The chain is Pregnancy-associated glycoprotein 59 (PAG59) from Capra hircus (Goat).